We begin with the raw amino-acid sequence, 328 residues long: 4-hydroxythreonine-4-phosphate dehydrogenase (328 aa).

Residues histidine 135 and threonine 136 each coordinate substrate. A divalent metal cation is bound by residues histidine 165, histidine 210, and histidine 265. Substrate contacts are provided by lysine 273, asparagine 282, and arginine 291.

It belongs to the PdxA family. In terms of assembly, homodimer. Requires Zn(2+) as cofactor. It depends on Mg(2+) as a cofactor. Co(2+) serves as cofactor.

The protein localises to the cytoplasm. The enzyme catalyses 4-(phosphooxy)-L-threonine + NAD(+) = 3-amino-2-oxopropyl phosphate + CO2 + NADH. Its pathway is cofactor biosynthesis; pyridoxine 5'-phosphate biosynthesis; pyridoxine 5'-phosphate from D-erythrose 4-phosphate: step 4/5. Catalyzes the NAD(P)-dependent oxidation of 4-(phosphooxy)-L-threonine (HTP) into 2-amino-3-oxo-4-(phosphooxy)butyric acid which spontaneously decarboxylates to form 3-amino-2-oxopropyl phosphate (AHAP). The polypeptide is 4-hydroxythreonine-4-phosphate dehydrogenase (Pseudomonas aeruginosa (strain ATCC 15692 / DSM 22644 / CIP 104116 / JCM 14847 / LMG 12228 / 1C / PRS 101 / PAO1)).